Consider the following 226-residue polypeptide: ATP synthase subunit a (226 aa).

A run of 6 helical transmembrane segments spans residues 17–37, 79–99, 105–125, 134–154, 176–196, and 199–219; these read FSYF…AMMA, LVAT…IPGF, SLNL…FEGI, FAHF…IEIV, LFLM…AYVL, and FMAF…LAGA.

It belongs to the ATPase A chain family. As to quaternary structure, F-type ATPases have 2 components, CF(1) - the catalytic core - and CF(0) - the membrane proton channel. CF(1) has five subunits: alpha(3), beta(3), gamma(1), delta(1), epsilon(1). CF(0) has three main subunits: a(1), b(2) and c(9-12). The alpha and beta chains form an alternating ring which encloses part of the gamma chain. CF(1) is attached to CF(0) by a central stalk formed by the gamma and epsilon chains, while a peripheral stalk is formed by the delta and b chains.

It localises to the cell inner membrane. Its function is as follows. Key component of the proton channel; it plays a direct role in the translocation of protons across the membrane. This is ATP synthase subunit a from Campylobacter jejuni subsp. jejuni serotype O:6 (strain 81116 / NCTC 11828).